The sequence spans 377 residues: DNA replication and repair protein RecF (377 aa).

30 to 37 serves as a coordination point for ATP; that stretch reads GNNGSGKS.

The protein belongs to the RecF family.

The protein localises to the cytoplasm. Its function is as follows. The RecF protein is involved in DNA metabolism; it is required for DNA replication and normal SOS inducibility. RecF binds preferentially to single-stranded, linear DNA. It also seems to bind ATP. The protein is DNA replication and repair protein RecF of Colwellia psychrerythraea (strain 34H / ATCC BAA-681) (Vibrio psychroerythus).